Here is a 483-residue protein sequence, read N- to C-terminus: Phloretin 2'-O-glucosyltransferase (483 aa).

H15 serves as the catalytic Proton acceptor. H15 is a binding site for an anthocyanidin. D118 (charge relay) is an active-site residue. 8 residues coordinate UDP-alpha-D-glucose: T140, A360, Q362, H377, W380, N381, S382, and E385. Position 400 (A400) interacts with an anthocyanidin. UDP-alpha-D-glucose-binding residues include E401 and Q402.

The protein belongs to the UDP-glycosyltransferase family.

It catalyses the reaction phloretin + UDP-alpha-D-glucose = phlorizin + UDP + H(+). Its function is as follows. Glycosyltransferase that possesses phloretin 2'-O-glycosyltransferase activity. Converts phloretin to phlorizin (phloretin 2'-O-glucoside), a potent antioxidant. Is specific for phloretin and does not possess glycosyltransferase activity toward naringenin, naringenin chalcone, eriodictyol, eriodictyol chalcone, apigenin, luteolin, kaempferol, quercetin, isoliquiritigenin, butein, caffeic acid, 2-coumaric acid, 3-coumaric acid, 3-hydroxybenzoic acid, 3,4-dihydroxybenzoic acid and 3,4-dihydroxyhydrocinnamic acid. Can glycosylate phloretin in the presence of UDP-glucose, UDP-xylose and UDP-galactose. The chain is Phloretin 2'-O-glucosyltransferase from Pyrus communis (Pear).